A 426-amino-acid chain; its full sequence is Actin-like protein 6B (426 aa).

Residues 39-82 form an essential for mediating its function in dendritic development; may contribute to neuronal-specific targeting region; that stretch reads TTVGLLAAEEGGGLELEGDKEKKGKIFHIDTNALHVPRDGAEVM.

This sequence belongs to the actin family. Component of the multiprotein chromatin-remodeling complexes SWI/SNF: SWI/SNF-A (BAF), SWI/SNF-B (PBAF) and related complexes. The canonical complex contains a catalytic subunit (either SMARCA4/BRG1/BAF190A or SMARCA2/BRM/BAF190B) and at least SMARCE1, ACTL6A/BAF53, SMARCC1/BAF155, SMARCC2/BAF170 and SMARCB1/SNF5/BAF47. Other subunits specific to each of the complexes may also be present permitting several possible combinations developmentally and tissue specific. Component of the BAF complex, which includes at least actin (ACTB), ARID1A/BAF250A, ARID1B/BAF250B, SMARCA2/BRM, SMARCA4/BRG1/BAF190A, ACTL6A/BAF53, ACTL6B/BAF53B, SMARCE1/BAF57, SMARCC1/BAF155, SMARCC2/BAF170, SMARCB1/SNF5/INI1 and one or more SMARCD1/BAF60A, SMARCD2/BAF60B, or SMARCD3/BAF60C. Component of neuron-specific chromatin remodeling complex (nBAF complex) composed of at least, ARID1A/BAF250A or ARID1B/BAF250B, SMARCD1/BAF60A or SMARCD2/BAF60B or SMARCD3/BAF60C, SMARCA2/BRM/BAF190B, SMARCA4/BRG1/BAF190A, SMARCB1/BAF47, SMARCC1/BAF155, SMARCE1/BAF57, SMARCC2/BAF170, DPF1/BAF45B, DPF3/BAF45C, ACTL6B/BAF53B and actin (ACTB). Note that the nBAF complex is polymorphic in regard to the ATPase, SMARCA2 and SMARCA4 occupying mutually exclusive positions. May be a component of the SWI/SNF-B (PBAF) chromatin remodeling complex, at least composed of SMARCA4/BRG1, SMARCB1/BAF47/SNF5, ACTL6A/BAF53A or ACTL6B/BAF53B, SMARCE1/BAF57, SMARCD1/BAF60A, SMARCD2/BAF60B, perhaps SMARCD3/BAF60C, SMARCC1/BAF155, SMARCC2/BAF170, PBRM1/BAF180, ARID2/BAF200 and actin.

The protein localises to the nucleus. Functionally, involved in transcriptional activation and repression of select genes by chromatin remodeling (alteration of DNA-nucleosome topology). Component of SWI/SNF chromatin remodeling complexes that carry out key enzymatic activities, changing chromatin structure by altering DNA-histone contacts within a nucleosome in an ATP-dependent manner. Belongs to the neuron-specific chromatin remodeling complex (nBAF complex), as such plays a role in remodeling mononucleosomes in an ATP-dependent fashion, and is required for postmitotic neural development and dendritic outgrowth. During neural development a switch from a stem/progenitor to a postmitotic chromatin remodeling mechanism occurs as neurons exit the cell cycle and become committed to their adult state. The transition from proliferating neural stem/progenitor cells to postmitotic neurons requires a switch in subunit composition of the npBAF and nBAF complexes. As neural progenitors exit mitosis and differentiate into neurons, npBAF complexes which contain ACTL6A/BAF53A and PHF10/BAF45A, are exchanged for homologous alternative ACTL6B/BAF53B and DPF1/BAF45B or DPF3/BAF45C subunits in neuron-specific complexes (nBAF). The npBAF complex is essential for the self-renewal/proliferative capacity of the multipotent neural stem cells. The nBAF complex along with CREST plays a role regulating the activity of genes essential for dendrite growth. ACTL6B/BAF53B is not essential for assembly of the nBAF complex but is required for targeting the complex and CREST to the promoter of genes essential for dendritic growth. Essential for neuronal maturation and dendrite development. The sequence is that of Actin-like protein 6B from Homo sapiens (Human).